The chain runs to 898 residues: Sodium/hydrogen exchanger 5 (898 aa).

The Cytoplasmic segment spans residues 1–3 (MLR). A helical transmembrane segment spans residues 4 to 24 (VALLLLPGLPLAGVGATEEPT). Residues 25 to 47 (QEPGPLGEPPGLALFRWQWHEVE) are Extracellular-facing. A helical membrane pass occupies residues 48 to 68 (APYLVALWILVASLAKIVFHL). Topologically, residues 69 to 75 (SRKVTSL) are cytoplasmic. A helical transmembrane segment spans residues 76-96 (VPESCLLILLGLALGGIVLAV). Topologically, residues 97–136 (AKKAEYQLEPGTFFLFLLPPIVLDSGYFMPSRLFFDNLGA) are extracellular. The helical transmembrane segment at 137-157 (ILTYAVVGTLWNAFTTGVALW) threads the bilayer. Residues 158–175 (GLQQAGLVAPRVQAGLLD) are Cytoplasmic-facing. Residues 176-196 (FLLFGSLISAVDPVAVLAVFE) traverse the membrane as a helical segment. Over 197–202 (EVHVNE) the chain is Extracellular. Residue asparagine 201 is glycosylated (N-linked (GlcNAc...) asparagine). Residues 203–223 (TLFIIVFGESLLNDAVTVVLY) form a helical membrane-spanning segment. Residues 224–248 (KVCNSFVEMGSANVQATDYLKGVAS) are Cytoplasmic-facing. Residues 249-269 (LFVVSLGGAAVGLVFAFLLAL) form a helical membrane-spanning segment. At 270 to 278 (TTRFTKRVR) the chain is on the extracellular side. Residues 279 to 299 (IIEPLLVFLLAYAAYLTAEMA) traverse the membrane as a helical segment. Residues 300–333 (SLSAILAVTMCGLGCKKYVEANISHKSRTAVKYT) are Cytoplasmic-facing. The chain crosses the membrane as a helical span at residues 334 to 354 (MKTLASSAETVIFMLLGISAV). The Extracellular portion of the chain corresponds to 355–362 (DSSKWAWD). Residues 363 to 383 (SGLVLGTLFFILFFRALGVVL) traverse the membrane as a helical segment. Residues 384–400 (QTWVLNQFRLVPLDKID) are Cytoplasmic-facing. Residues 401 to 421 (QVVMSYGGLRGAVAFALVILL) form a helical membrane-spanning segment. At 422 to 430 (DRTKVPAKD) the chain is on the extracellular side. A helical membrane pass occupies residues 431–451 (YFVATTIVVVFFTVIVQGLTI). Topologically, residues 452–898 (KPLVKWLRVK…CIQFNRGGRL (447 aa)) are cytoplasmic. Disordered stretches follow at residues 660–692 (TKSKPRPRKTGHKKKDGVANPEATNGKPPRDLG) and 801–888 (ESLA…NSHW). Positions 662-674 (SKPRPRKTGHKKK) are enriched in basic residues. Residues 856-867 (ESSADIPQQQEL) are compositionally biased toward polar residues.

The protein belongs to the monovalent cation:proton antiporter 1 (CPA1) transporter (TC 2.A.36) family. Interacts with CHP1 and CHP2. Interacts with ARRB2; facilitates the endocytosis of SLC9A5 from the plasma membrane. Interacts with RACK1; this interaction positively regulates SLC9A5 activity and promotes SLC9A5 localization to focal adhesions. Interacts with SCAMP2; this interaction regulates SLC9A5 cell-surface targeting and SLC9A5 activity. Phosphorylated by PRKAA2; promotes its accumulation at the cell surface. Phosphorylated by CSNK2A1 in a manner favoring its beta-arrestin binding and endocytosis. As to expression, highly expressed in brain. Strongly expressed in the dentate gyrus.

It is found in the cell membrane. The protein resides in the recycling endosome membrane. Its subcellular location is the cell projection. It localises to the dendritic spine membrane. The protein localises to the synaptic cell membrane. It is found in the cell junction. The protein resides in the focal adhesion. The enzyme catalyses Na(+)(in) + H(+)(out) = Na(+)(out) + H(+)(in). In terms of biological role, plasma membrane Na(+)/H(+) antiporter. Mediates the electroneutral exchange of intracellular H(+) ions for extracellular Na(+) in 1:1 stoichiometry. Responsible for regulating intracellular pH homeostasis, in particular in neural tissues. Acts as a negative regulator of dendritic spine growth. Plays a role in postsynaptic remodeling and signaling. Can also contribute to organellar pH regulation, with consequences for receptor tyrosine kinase trafficking. The sequence is that of Sodium/hydrogen exchanger 5 (Slc9a5) from Rattus norvegicus (Rat).